Here is a 137-residue protein sequence, read N- to C-terminus: Oleosin Ara h 11.0102 (137 aa).

At Ala2 the chain carries N-acetylalanine; alternate. 2 consecutive transmembrane segments (helical) span residues 27-47 (AVVA…ATVI) and 55-75 (LFVI…LLGL).

Belongs to the oleosin family. In terms of tissue distribution, expressed in seeds (at protein level).

Its subcellular location is the lipid droplet. It localises to the membrane. In terms of biological role, may have a structural role to stabilize the lipid body during desiccation of the seed by preventing coalescence of the oil. Probably interacts with both lipid and phospholipid moieties of lipid bodies. May also provide recognition signals for specific lipase anchorage in lipolysis during seedling growth. The chain is Oleosin Ara h 11.0102 from Arachis hypogaea (Peanut).